A 156-amino-acid chain; its full sequence is Ribosomal RNA large subunit methyltransferase H (156 aa).

Residues L73, G104, and 123-128 (LSSLTL) each bind S-adenosyl-L-methionine.

The protein belongs to the RNA methyltransferase RlmH family. Homodimer.

It is found in the cytoplasm. It carries out the reaction pseudouridine(1915) in 23S rRNA + S-adenosyl-L-methionine = N(3)-methylpseudouridine(1915) in 23S rRNA + S-adenosyl-L-homocysteine + H(+). Its function is as follows. Specifically methylates the pseudouridine at position 1915 (m3Psi1915) in 23S rRNA. The protein is Ribosomal RNA large subunit methyltransferase H of Bordetella petrii (strain ATCC BAA-461 / DSM 12804 / CCUG 43448).